Here is an 89-residue protein sequence, read N- to C-terminus: Large ribosomal subunit protein bL27 (89 aa).

Residues 1–23 (MAHKKAGGSSRNGRDSHSKRLGV) form a disordered region.

This sequence belongs to the bacterial ribosomal protein bL27 family.

The sequence is that of Large ribosomal subunit protein bL27 from Mesorhizobium japonicum (strain LMG 29417 / CECT 9101 / MAFF 303099) (Mesorhizobium loti (strain MAFF 303099)).